A 316-amino-acid polypeptide reads, in one-letter code: Probable cell division protein WhiA (316 aa).

Positions 277-310 (SLEQLGRLADPPITKDAIAGRIRRLLQLAEKTEK) form a DNA-binding region, H-T-H motif.

The protein belongs to the WhiA family.

Functionally, involved in cell division and chromosome segregation. The sequence is that of Probable cell division protein WhiA from Bifidobacterium adolescentis (strain ATCC 15703 / DSM 20083 / NCTC 11814 / E194a).